The primary structure comprises 208 residues: 2,3-bisphosphoglycerate-dependent phosphoglycerate mutase (208 aa).

Residues 9–16 (RHGQSEWN), 22–23 (TG), arginine 61, 88–91 (ERDY), lysine 99, 115–116 (RR), and 159–160 (GN) contribute to the substrate site. Residue histidine 10 is the Tele-phosphohistidine intermediate of the active site. Glutamate 88 serves as the catalytic Proton donor/acceptor.

This sequence belongs to the phosphoglycerate mutase family. BPG-dependent PGAM subfamily. Homodimer.

It carries out the reaction (2R)-2-phosphoglycerate = (2R)-3-phosphoglycerate. It functions in the pathway carbohydrate degradation; glycolysis; pyruvate from D-glyceraldehyde 3-phosphate: step 3/5. Catalyzes the interconversion of 2-phosphoglycerate and 3-phosphoglycerate. The sequence is that of 2,3-bisphosphoglycerate-dependent phosphoglycerate mutase from Methylobacterium sp. (strain 4-46).